The sequence spans 901 residues: HTH-type transcriptional regulator MalT (901 aa).

An ATP-binding site is contributed by 39 to 46; the sequence is SPAGYGKT. Residues 829 to 894 form the HTH luxR-type domain; sequence ELIRTSPLTQ…DAVQHAQQLL (66 aa). A DNA-binding region (H-T-H motif) is located at residues 853-872; that stretch reads NDQIAGELDVAATTIKTHIR.

The protein belongs to the MalT family. Monomer in solution. Oligomerizes to an active state in the presence of the positive effectors ATP and maltotriose.

With respect to regulation, activated by ATP and maltotriose, which are both required for DNA binding. Functionally, positively regulates the transcription of the maltose regulon whose gene products are responsible for uptake and catabolism of malto-oligosaccharides. Specifically binds to the promoter region of its target genes, recognizing a short DNA motif called the MalT box. The chain is HTH-type transcriptional regulator MalT from Cronobacter sakazakii (strain ATCC BAA-894) (Enterobacter sakazakii).